Consider the following 310-residue polypeptide: UDP-N-acetylenolpyruvoylglucosamine reductase (310 aa).

Residues 34-213 (RAGGNAEVLF…LRRMNEITSS (180 aa)) form the FAD-binding PCMH-type domain. Residue arginine 178 is part of the active site. Catalysis depends on serine 227, which acts as the Proton donor. The active site involves glutamate 297.

The protein belongs to the MurB family. The cofactor is FAD.

The protein localises to the cytoplasm. It carries out the reaction UDP-N-acetyl-alpha-D-muramate + NADP(+) = UDP-N-acetyl-3-O-(1-carboxyvinyl)-alpha-D-glucosamine + NADPH + H(+). It participates in cell wall biogenesis; peptidoglycan biosynthesis. Its function is as follows. Cell wall formation. The polypeptide is UDP-N-acetylenolpyruvoylglucosamine reductase (Parvibaculum lavamentivorans (strain DS-1 / DSM 13023 / NCIMB 13966)).